Reading from the N-terminus, the 377-residue chain is Ribosomal RNA large subunit methyltransferase G (377 aa).

Belongs to the methyltransferase superfamily. RlmG family.

The protein resides in the cytoplasm. The catalysed reaction is guanosine(1835) in 23S rRNA + S-adenosyl-L-methionine = N(2)-methylguanosine(1835) in 23S rRNA + S-adenosyl-L-homocysteine + H(+). Its function is as follows. Specifically methylates the guanine in position 1835 (m2G1835) of 23S rRNA. The polypeptide is Ribosomal RNA large subunit methyltransferase G (Streptomyces coelicolor (strain ATCC BAA-471 / A3(2) / M145)).